The following is a 395-amino-acid chain: Zinc finger protein 200 (395 aa).

The segment at 157 to 208 is disordered; sequence VNGSNPEGEDPEREPVENEDYREKSSDDDEMDSSLVSQQPPDNQEKERLNTS. Residues 169-181 show a composition bias toward basic and acidic residues; the sequence is REPVENEDYREKS. Residues 246–395 are interaction with PRMT3; the sequence is RRTRRWYTCP…HSACKTRKQK (150 aa). 5 C2H2-type zinc fingers span residues 252-274, 280-302, 308-330, 336-358, and 364-386; these read YTCP…QRTH, YDCN…ERIH, YSCS…EGIH, FKCP…LQSH, and YGCK…EKTH.

In terms of assembly, interacts (via C-terminus) with PRMT3 (via zinc-finger); the interaction is direct and required to localize protein arginine N-methyltransferase PRMT3 to the nucleus and inhibit its proteasomal degradation. As to expression, highly expressed in testis, weakly expressed in spleen, thymus, prostate, ovary, small intestine colon and peripheral blood leukocytes.

The protein resides in the nucleus. In terms of biological role, localizes protein arginine N-methyltransferase PRMT3 to the nucleus. The polypeptide is Zinc finger protein 200 (ZNF200) (Homo sapiens (Human)).